Here is a 562-residue protein sequence, read N- to C-terminus: Dihydroxy-acid dehydratase (562 aa).

Asp78 is a binding site for Mg(2+). Cys119 provides a ligand contact to [2Fe-2S] cluster. Asp120 and Lys121 together coordinate Mg(2+). Lys121 is modified (N6-carboxylysine). A [2Fe-2S] cluster-binding site is contributed by Cys192. Glu449 lines the Mg(2+) pocket. Ser475 functions as the Proton acceptor in the catalytic mechanism.

The protein belongs to the IlvD/Edd family. Homodimer. It depends on [2Fe-2S] cluster as a cofactor. The cofactor is Mg(2+).

The catalysed reaction is (2R)-2,3-dihydroxy-3-methylbutanoate = 3-methyl-2-oxobutanoate + H2O. It catalyses the reaction (2R,3R)-2,3-dihydroxy-3-methylpentanoate = (S)-3-methyl-2-oxopentanoate + H2O. It functions in the pathway amino-acid biosynthesis; L-isoleucine biosynthesis; L-isoleucine from 2-oxobutanoate: step 3/4. The protein operates within amino-acid biosynthesis; L-valine biosynthesis; L-valine from pyruvate: step 3/4. In terms of biological role, functions in the biosynthesis of branched-chain amino acids. Catalyzes the dehydration of (2R,3R)-2,3-dihydroxy-3-methylpentanoate (2,3-dihydroxy-3-methylvalerate) into 2-oxo-3-methylpentanoate (2-oxo-3-methylvalerate) and of (2R)-2,3-dihydroxy-3-methylbutanoate (2,3-dihydroxyisovalerate) into 2-oxo-3-methylbutanoate (2-oxoisovalerate), the penultimate precursor to L-isoleucine and L-valine, respectively. This Aliarcobacter butzleri (strain RM4018) (Arcobacter butzleri) protein is Dihydroxy-acid dehydratase.